The sequence spans 584 residues: Alkaline nuclease (584 aa).

The segment at glycine 409 to glutamate 430 is disordered.

The protein belongs to the herpesviridae alkaline nuclease family. In terms of assembly, interacts with major DNA-binding protein; this interaction increases the nuclease processivity of the alkaline exonuclease.

It is found in the host nucleus. It localises to the host cytoplasm. Functionally, plays a role in processing non linear or branched viral DNA intermediates in order to promote the production of mature packaged unit-length linear progeny viral DNA molecules. Exhibits endonuclease and exonuclease activities and accepts both double-stranded and single-stranded DNA as substrate. Exonuclease digestion of DNA is in the 5'-&gt; 3' direction and the products are 5'-monophosphate nucleosides. Additionally, forms a recombinase with the major DNA-binding protein, which displays strand exchange activity. This Human cytomegalovirus (strain AD169) (HHV-5) protein is Alkaline nuclease (UL98).